The primary structure comprises 94 residues: Large ribosomal subunit protein uL23 (94 aa).

Belongs to the universal ribosomal protein uL23 family. In terms of assembly, part of the 50S ribosomal subunit. Contacts protein L29, and trigger factor when it is bound to the ribosome.

One of the early assembly proteins it binds 23S rRNA. One of the proteins that surrounds the polypeptide exit tunnel on the outside of the ribosome. Forms the main docking site for trigger factor binding to the ribosome. The polypeptide is Large ribosomal subunit protein uL23 (Dehalococcoides mccartyi (strain ATCC BAA-2100 / JCM 16839 / KCTC 5957 / BAV1)).